Reading from the N-terminus, the 312-residue chain is MSSLRTADDTWDIATSVGSTAVMVAASRAAETERDEALIRDPYARLLVTGAGTGIWESVLDAKFVETVAAADAEAAAIFEHMISYQAVRTHFFDAFFTAAAEAGIRQIVILASGLDSRAYRLDWPSGTTVYEIDQPKVLEYKSATLAEHGVEPAATRREVGIDLRHDWPAALRGAGFDPSRPTAWLAEGLLMYLPADAQDRLFEQITELSAPGSRVAAETAGVQAEDRRQQMRERFERIAEKFDMTASLDIQQLIYEDPDRADVADWLDAHGWTATAVSSQQEMRRLDRWALPADLTDDDAFSNFVTAEKQS.

S-adenosyl-L-methionine contacts are provided by residues Asp134 and 163 to 164 (DL).

It belongs to the UPF0677 family.

Functionally, exhibits S-adenosyl-L-methionine-dependent methyltransferase activity. This chain is Putative S-adenosyl-L-methionine-dependent methyltransferase Mkms_0097, found in Mycobacterium sp. (strain KMS).